The sequence spans 141 residues: Globin, extracellular monomeric (141 aa).

Positions 1-141 (ECDALQRFKV…LGVITGAIHD (141 aa)) constitute a Globin domain. Residues C2 and C131 are joined by a disulfide bond. Heme b is bound at residue H94.

The protein belongs to the globin family. In terms of assembly, the giant hemoglobins of worms are formed of a monomeric subunit and a disulfide-bonded trimer. This subunit is monomeric.

The protein localises to the secreted. The sequence is that of Globin, extracellular monomeric from Tubifex tubifex (Sludge worm).